The following is a 354-amino-acid chain: Protein-glutamate methylesterase/protein-glutamine glutaminase (354 aa).

The Response regulatory domain maps to Arg-6–Ala-123. At Asp-57 the chain carries 4-aspartylphosphate. The 193-residue stretch at Ala-159–Arg-351 folds into the CheB-type methylesterase domain. Catalysis depends on residues Ser-171, His-197, and Asp-293.

The protein belongs to the CheB family. Post-translationally, phosphorylated by CheA. Phosphorylation of the N-terminal regulatory domain activates the methylesterase activity.

The protein resides in the cytoplasm. The enzyme catalyses [protein]-L-glutamate 5-O-methyl ester + H2O = L-glutamyl-[protein] + methanol + H(+). The catalysed reaction is L-glutaminyl-[protein] + H2O = L-glutamyl-[protein] + NH4(+). Involved in chemotaxis. Part of a chemotaxis signal transduction system that modulates chemotaxis in response to various stimuli. Catalyzes the demethylation of specific methylglutamate residues introduced into the chemoreceptors (methyl-accepting chemotaxis proteins or MCP) by CheR. Also mediates the irreversible deamidation of specific glutamine residues to glutamic acid. This is Protein-glutamate methylesterase/protein-glutamine glutaminase from Bdellovibrio bacteriovorus (strain ATCC 15356 / DSM 50701 / NCIMB 9529 / HD100).